Reading from the N-terminus, the 133-residue chain is Ribosome-binding factor A (133 aa).

This sequence belongs to the RbfA family. Monomer. Binds 30S ribosomal subunits, but not 50S ribosomal subunits or 70S ribosomes.

It localises to the cytoplasm. Its function is as follows. One of several proteins that assist in the late maturation steps of the functional core of the 30S ribosomal subunit. Associates with free 30S ribosomal subunits (but not with 30S subunits that are part of 70S ribosomes or polysomes). Required for efficient processing of 16S rRNA. May interact with the 5'-terminal helix region of 16S rRNA. The protein is Ribosome-binding factor A of Shigella boydii serotype 18 (strain CDC 3083-94 / BS512).